The primary structure comprises 161 residues: MKYDTSELCDIYQEDVNVVEPLFSNFGGRSSFGGQIITVKCFEDNGLLYDLLEQNGRGHILLIDGGGSVRRALIDADLARLAVQNEWEGLVVYGAVRQVDDLEELDIGIQALAAIPVGAAGEGIGESDVRVNFGGVTFFSGDHLYADNTGMILSEDPLDIE.

This sequence belongs to the RraA family. In terms of assembly, homotrimer. Binds to both RNA-binding sites in the C-terminal region of Rne and to RhlB.

It is found in the cytoplasm. Functionally, globally modulates RNA abundance by binding to RNase E (Rne) and regulating its endonucleolytic activity. Can modulate Rne action in a substrate-dependent manner by altering the composition of the degradosome. Modulates RNA-binding and helicase activities of the degradosome. In Klebsiella pneumoniae (strain 342), this protein is Regulator of ribonuclease activity A.